A 709-amino-acid polypeptide reads, in one-letter code: Nucleobase-ascorbate transporter 11 (709 aa).

2 disordered regions span residues 1–28 (MDSG…YGER) and 58–167 (TGFV…SEDG). A compositionally biased stretch (gly residues) spans 15-25 (KGNGSGGGNGY). Residues 65 to 74 (SGETSTSTRT) show a composition bias toward polar residues. Composition is skewed to basic and acidic residues over residues 75-89 (KFGE…KGRD), 108-132 (NRPE…RLNR), and 142-151 (EGGKINKDLE). A run of 12 helical transmembrane segments spans residues 196-216 (YLSL…AMDG), 222-242 (ASVI…HCYF), 246-266 (LPLV…VINS), 288-308 (IIVG…SLLL), 310-330 (FINP…FFSY), 336-356 (GTCV…TLYL), 369-389 (IYAV…LTVG), 454-474 (IIMI…YHSA), 532-552 (LVIG…GAIL), 555-575 (IPQA…VSLG), 590-610 (ITIV…FQQY), and 642-662 (FAMN…AFIL).

The protein belongs to the nucleobase:cation symporter-2 (NCS2) (TC 2.A.40) family. In terms of tissue distribution, expressed in leaf primordia and vasculature of pedicels, rosette leaves, sepals, carpels and siliques. Expressed in the root central cylinder.

The protein resides in the membrane. This Arabidopsis thaliana (Mouse-ear cress) protein is Nucleobase-ascorbate transporter 11 (NAT11).